The chain runs to 892 residues: Histone deacetylase 4 (892 aa).

The disordered stretch occupies residues 145-225 (NGNLSNLSVP…MSNVNGHDNS (81 aa)). Composition is skewed to polar residues over residues 171 to 192 (SAPT…ISQL) and 208 to 222 (ESNS…VNGH). Residues 481–822 (STGLGYDPLM…VQALIGESDD (342 aa)) are histone deacetylase. The active site involves histidine 628.

It belongs to the histone deacetylase family. HD type 2 subfamily.

The protein resides in the nucleus. The enzyme catalyses N(6)-acetyl-L-lysyl-[histone] + H2O = L-lysyl-[histone] + acetate. Responsible for the deacetylation of lysine residues on the N-terminal part of the core histones (H2A, H2B, H3 and H4). Histone deacetylation gives a tag for epigenetic repression and plays an important role in transcriptional regulation, cell cycle progression and developmental events. Histone deacetylases act via the formation of large multiprotein complexes. This is Histone deacetylase 4 (hda-4) from Caenorhabditis briggsae.